We begin with the raw amino-acid sequence, 582 residues long: Protein NUCLEAR FUSION DEFECTIVE 4 (582 aa).

The disordered stretch occupies residues 1–20 (MRPRIRDVSDKLRPNRASFD). 8 helical membrane-spanning segments follow: residues 46-66 (VLVA…FSAY), 100-120 (IALG…MGFV), 132-152 (IITL…LSIC), 172-192 (LALS…SLAF), 202-222 (LYLL…LYPV), 243-263 (VFTI…LSSS), 270-290 (LNFI…LLVY), and 358-378 (LEFW…LVYS). The N-linked (GlcNAc...) asparagine glycan is linked to N391. A run of 5 helical transmembrane segments spans residues 395–412 (LVTI…LSAA), 425–445 (TGWF…LAVS), 458–478 (LIGL…SDLF), 489–509 (ILIT…ASIY), and 536–556 (TFVF…SLYI).

It is found in the membrane. Functionally, required for karyogamy during female gametophyte development, when the two polar nuclei fuse to form the diploid central cell nucleus. In Arabidopsis thaliana (Mouse-ear cress), this protein is Protein NUCLEAR FUSION DEFECTIVE 4.